Here is a 453-residue protein sequence, read N- to C-terminus: Succinate-semialdehyde dehydrogenase (acetylating) (453 aa).

188-193 (ATGGAG) lines the NADP(+) pocket. The active site involves cysteine 242.

Homodimer.

The enzyme catalyses succinate semialdehyde + NADP(+) + CoA = succinyl-CoA + NADPH + H(+). In terms of biological role, catalyzes the reduction of succinate semialdehyde to succinyl-CoA. The enzyme is specific for succinate semialdehyde and succinyl-CoA, and only shows low activity with palmitoyl-CoA. There is no activity with NAD(+) as cosubstrate. The polypeptide is Succinate-semialdehyde dehydrogenase (acetylating) (sucD) (Clostridium kluyveri (strain ATCC 8527 / DSM 555 / NBRC 12016 / NCIMB 10680 / K1)).